The following is an 812-amino-acid chain: MFGTPSRRTFLTASALSAMALAASPTVTDAIAAPGPDSWSALCERWIDIITGRRAARTSDPRARAIIAKTDRKVAEILTDLVSGSSRQTVLISADLRKEQSPFITKTARAIESMACGWATPGSSYHKDPEILSACIEGLRDFCRLRYNPSQDEYGNWWDWEDGASRAVADVMCILHDVLPPEVMSAAAAGIDHFIPDPWFQQPGSVKPTANPVQPVVSTGANRMDLTRAVMCRSIATGDEKRLRHAVDGLPDAWRVTTEGDGFRADGGFIQHSHIPYTGGYGDVLFSGLAMLFPLVSGMRFDIDESARKAFHDQVERGFIPVMYNGQILDDVRGRSISRINESAAMHGISIARAMLMMADALPTHRAEQWRGIVHGWMARNTFDHLSEPSTLVDISLFDAAAKAPRPGVVDAELLRVHGPSRPATADWLITVSNCSDRIAWYEYGNGENEWAYRTSQGMRYLLLPGDMGQYEDGYWATVDYSAPTGTTVDSTPLKRAVGASWAAKTPTNEWSGGLASGSWSAAASHITSQDSALKARRLWVGLKDAMVELTTDVTTDASRAITVVEHRKVASSSTKLLVDGNRVSSATSFQNPRWAHLDGVGGYVFATDTDLSADVATRKGTWIDVNPSRKVKGADEVIERAYASLHGHPPRSSSPWALLPTASRSHTMALATRPGVEPFTVLRNDGNRPGRASAGALLTKDPTVVTTLAFWKPATCGGVAVNRPALVQTRESANQMEVVIVEPTQKRGSLTVTIEGSWKVKTADSHVDVSCENAAGTLHVDTAGLGGQSVRVTLARQVTQTPSGGGRHDRA.

The segment at residues 1-32 is a signal peptide (tat-type signal); it reads MFGTPSRRTFLTASALSAMALAASPTVTDAIA. Active-site residues include Asn222, His272, and Tyr281.

It belongs to the polysaccharide lyase 8 family. In terms of processing, predicted to be exported by the Tat system. The position of the signal peptide cleavage has been experimentally proven.

Its subcellular location is the secreted. The enzyme catalyses [hyaluronan](n) = n 3-(4-deoxy-beta-D-gluc-4-enuronosyl)-N-acetyl-D-glucosamine + H2O. Degrades hyaluronic acid (HA) exclusively into HA disaccharides (HA-2). Produced HA-2s confer anti-inflammatory properties leading to reduced immunopathology in the mouse model of acne. The protein is Hyaluronate lyase HylB of Cutibacterium acnes (Propionibacterium acnes).